The sequence spans 143 residues: Large ribosomal subunit protein uL13 (143 aa).

Belongs to the universal ribosomal protein uL13 family. As to quaternary structure, part of the 50S ribosomal subunit.

Its function is as follows. This protein is one of the early assembly proteins of the 50S ribosomal subunit, although it is not seen to bind rRNA by itself. It is important during the early stages of 50S assembly. In Alkaliphilus oremlandii (strain OhILAs) (Clostridium oremlandii (strain OhILAs)), this protein is Large ribosomal subunit protein uL13.